A 128-amino-acid chain; its full sequence is Small ribosomal subunit protein eS6 (128 aa).

It belongs to the eukaryotic ribosomal protein eS6 family.

This is Small ribosomal subunit protein eS6 from Thermoplasma volcanium (strain ATCC 51530 / DSM 4299 / JCM 9571 / NBRC 15438 / GSS1).